The chain runs to 134 residues: MLSPKRTRFRKQHRGRMKGISHRGNHISFGKYALQALEPAWITSRQIEAGRRAMTRNARRGGKIWVRIFPDKPVTLRPAETRMGSGKGSPEYWVAVVKPGRILYEMGGVTENIARRAISLAASKMPIRTQFIIS.

The tract at residues Met-1–His-22 is disordered.

It belongs to the universal ribosomal protein uL16 family. As to quaternary structure, part of the 50S ribosomal subunit.

The protein localises to the plastid. The protein resides in the chloroplast. This Nicotiana tabacum (Common tobacco) protein is Large ribosomal subunit protein uL16c.